Here is a 103-residue protein sequence, read N- to C-terminus: Small ribosomal subunit protein uS10 (103 aa).

It belongs to the universal ribosomal protein uS10 family. As to quaternary structure, part of the 30S ribosomal subunit.

In terms of biological role, involved in the binding of tRNA to the ribosomes. This is Small ribosomal subunit protein uS10 from Clostridioides difficile (strain 630) (Peptoclostridium difficile).